The following is a 345-amino-acid chain: Phosphoribosylformylglycinamidine cyclo-ligase (345 aa).

Belongs to the AIR synthase family.

Its subcellular location is the cytoplasm. It catalyses the reaction 2-formamido-N(1)-(5-O-phospho-beta-D-ribosyl)acetamidine + ATP = 5-amino-1-(5-phospho-beta-D-ribosyl)imidazole + ADP + phosphate + H(+). Its pathway is purine metabolism; IMP biosynthesis via de novo pathway; 5-amino-1-(5-phospho-D-ribosyl)imidazole from N(2)-formyl-N(1)-(5-phospho-D-ribosyl)glycinamide: step 2/2. The chain is Phosphoribosylformylglycinamidine cyclo-ligase from Shewanella denitrificans (strain OS217 / ATCC BAA-1090 / DSM 15013).